The chain runs to 232 residues: Ubiquinone biosynthesis O-methyltransferase (232 aa).

S-adenosyl-L-methionine is bound by residues R36, G55, D76, and M120.

It belongs to the methyltransferase superfamily. UbiG/COQ3 family.

It carries out the reaction a 3-demethylubiquinol + S-adenosyl-L-methionine = a ubiquinol + S-adenosyl-L-homocysteine + H(+). The catalysed reaction is a 3-(all-trans-polyprenyl)benzene-1,2-diol + S-adenosyl-L-methionine = a 2-methoxy-6-(all-trans-polyprenyl)phenol + S-adenosyl-L-homocysteine + H(+). It participates in cofactor biosynthesis; ubiquinone biosynthesis. O-methyltransferase that catalyzes the 2 O-methylation steps in the ubiquinone biosynthetic pathway. The chain is Ubiquinone biosynthesis O-methyltransferase from Burkholderia cenocepacia (strain ATCC BAA-245 / DSM 16553 / LMG 16656 / NCTC 13227 / J2315 / CF5610) (Burkholderia cepacia (strain J2315)).